The following is a 169-amino-acid chain: CKLF-like MARVEL transmembrane domain-containing protein 2A (169 aa).

The next 4 membrane-spanning stretches (helical) occupy residues 40–60 (FWLS…ISAL), 69–89 (HPVL…FIFL), 98–118 (IPFV…CVFL), and 136–156 (YLTA…DMLL). In terms of domain architecture, MARVEL spans 40 to 162 (FWLSGHAVFK…DMLLQFQHFR (123 aa)).

This sequence belongs to the chemokine-like factor family.

It is found in the membrane. The sequence is that of CKLF-like MARVEL transmembrane domain-containing protein 2A (Cmtm2a) from Mus musculus (Mouse).